The chain runs to 231 residues: Peroxisomal membrane protein 11E (231 aa).

The Cytoplasmic segment spans residues methionine 1–lysine 91. A helical transmembrane segment spans residues asparagine 92–glycine 108. At arginine 109 to serine 202 the chain is on the lumenal side. The helical transmembrane segment at proline 203–leucine 222 threads the bilayer. Residues proline 223–proline 231 are Cytoplasmic-facing.

The protein belongs to the peroxin-11 family. Homooligomer. Interacts with ARC5 and FIS1B on peroxisomes. As to expression, expressed in leaves and developing siliques.

Its subcellular location is the peroxisome membrane. Its function is as follows. Involved in peroxisomal proliferation. Promotes peroxisomal duplication, aggregation or elongation without fission. In Arabidopsis thaliana (Mouse-ear cress), this protein is Peroxisomal membrane protein 11E (PEX11E).